A 451-amino-acid polypeptide reads, in one-letter code: Tubulin gamma-1 chain (451 aa).

Ser131 is subject to Phosphoserine; by BRSK1. Residue 142 to 148 (AGGTGSG) participates in GTP binding.

It belongs to the tubulin family. In terms of assembly, component of the gamma-tubulin ring complex (gTuRC) consisting of TUBGCP2, TUBGCP3, TUBGCP4, TUBGCP5 and TUBGCP6 and gamma-tubulin TUBG1 or TUBG2. TUBGCP2, TUBGCP3, TUBGCP4, TUBGCP5 and TUBGCP6 assemble in a 5:5:2:1:1 stoichiometry; each is associated with a gamma-tubulin, thereby arranging 14 gamma-tubulins in a helical manner. Gamma-tubulin at the first position is blocked by TUBGCP3 at the last position, allowing 13 protafilaments to grow into a microtubule. The gTuRC (via TUBGCP3 and TUBGCP6) interacts with ACTB and MZT1; the interactions form a luminal bridge that stabilizes the initial structure during complex assembly. The gTuRC (via TUBGCP2) interacts with MZT2A/MZT2B and CDK5RAP2 (via CM1 motif); the interactions play a role in gTuRC activation. Interacts with alpha-beta tubulin heterodimers; the interaction allows microtubules to nucleate from the gTuRC. Interacts with B9D2. Interacts with CDK5RAP2; the interaction is leading to centrosomal localization of TUBG1 and CDK5RAP2. Interacts with CIMAP3. Interacts with SAS6 and NUP62 at the centrosome. Interacts with EML3 (phosphorylated at 'Thr-881') and HAUS8. Interacts with DNM2; this interaction may participate in centrosome cohesion. Interacts with CCDC66. Post-translationally, phosphorylation at Ser-131 by BRSK1 regulates centrosome duplication, possibly by mediating relocation of gamma-tubulin and its associated proteins from the cytoplasm to the centrosome.

The protein localises to the cytoplasm. Its subcellular location is the cytoskeleton. The protein resides in the microtubule organizing center. It localises to the centrosome. It is found in the spindle. Its function is as follows. Tubulin is the major constituent of microtubules, protein filaments consisting of alpha- and beta-tubulin heterodimers. Gamma-tubulin is a key component of the gamma-tubulin ring complex (gTuRC) which mediates microtubule nucleation. The gTuRC regulates the minus-end nucleation of alpha-beta tubulin heterodimers that grow into microtubule protafilaments, a critical step in centrosome duplication and spindle formation. This chain is Tubulin gamma-1 chain, found in Canis lupus familiaris (Dog).